The following is a 125-amino-acid chain: Glycine cleavage system H protein (125 aa).

One can recognise a Lipoyl-binding domain in the interval 22 to 104 (SYIIGITDFA…YDTGWILKLT (83 aa)). Lysine 63 is modified (N6-lipoyllysine).

It belongs to the GcvH family. In terms of assembly, the glycine cleavage system is composed of four proteins: P, T, L and H. (R)-lipoate serves as cofactor.

The glycine cleavage system catalyzes the degradation of glycine. The H protein shuttles the methylamine group of glycine from the P protein to the T protein. In terms of biological role, is also involved in protein lipoylation via its role as an octanoyl/lipoyl carrier protein intermediate. The protein is Glycine cleavage system H protein of Listeria welshimeri serovar 6b (strain ATCC 35897 / DSM 20650 / CCUG 15529 / CIP 8149 / NCTC 11857 / SLCC 5334 / V8).